We begin with the raw amino-acid sequence, 270 residues long: MSSNELVDQIMAQVIARVATPEQQAIPENNPPTRETAMAEKSCSLTEFVGTAIGDTVGLVIANVDSALLDAMKLEKRYRSIGILGARTGAGPHIMAADEAVKATNTEVVSIELPRDTKGGAGHGSLIILGGNDVSDVKRGIEVALKELDRTFGDVYANEAGHIEMQYTARASYALEKAFGAPIGRACGVIVGAPASVGVLMADTALKSANVEVVAYSSPAHGTSFSNEAILVISGDSGAVRQAVISAREIGKTVLGTLGSEPKNDRPSYI.

2 consecutive BMC circularly permuted domains span residues 47–152 (EFVG…DRTF) and 154–262 (DVYA…GSEP).

The protein belongs to the EutL/PduB family. As to quaternary structure, homotrimerizes to form a pseudohexamer with a central pore. The trimers pack into an array. Both forms interact with shell protein PduA. In purified BMCs seen as a 30.0 kDa and 25.0 kDa form; the smaller form is called PduB'.

Its subcellular location is the bacterial microcompartment. It functions in the pathway polyol metabolism; 1,2-propanediol degradation. Functionally, the two proteins produced are among the major shell proteins of the bacterial microcompartment (BMC) shell dedicated to 1,2-propanediol (1,2-PD) degradation. Overexpression of the gene gives large amorphous intracellular structures; when only PduB is overexpressed large circular bodies are observed which contain concentric rings, whereas with PduB' overexpression internal bodies with regular straight-lined structures were generated. The N-terminus of the long form (PduB) is required for correct formation of BMCs. May play a major role in binding the enzyme contents to the shell. Its function is as follows. Expression of a cosmid containing the full 21-gene pdu operon in E.coli allows E.coli to grow on 1,2-propanediol (1,2-PD) with the appearance of BMCs in its cytoplasm. The 1,2-PD-specific bacterial microcompartment (BMC) concentrates low levels of 1,2-PD catabolic enzymes, concentrates volatile reaction intermediates thus enhancing pathway flux and keeps the level of toxic, mutagenic propionaldehyde low. The sequence is that of Bacterial microcompartment shell protein PduB from Citrobacter freundii.